Reading from the N-terminus, the 87-residue chain is U3-theraphotoxin-Hhn1p (87 aa).

A signal peptide spans 1-24; sequence MVNMKASMFLTFAGLVLLFVVCYA. The propeptide occupies 25-52; it reads SESEEKEFPKEMLSSIFAVDNDFKQEER. 3 disulfide bridges follow: Cys54–Cys67, Cys61–Cys72, and Cys66–Cys79.

This sequence belongs to the neurotoxin 10 (Hwtx-1) family. 51 (Hntx-8) subfamily. Hntx-8 sub-subfamily. As to expression, expressed by the venom gland.

Its subcellular location is the secreted. Functionally, ion channel inhibitor. The chain is U3-theraphotoxin-Hhn1p from Cyriopagopus hainanus (Chinese bird spider).